A 296-amino-acid polypeptide reads, in one-letter code: DNA-3-methyladenine glycosylase (296 aa).

The residue at position 110 (Ser-110) is a Phosphoserine. The active-site Proton acceptor is Asp-209.

This sequence belongs to the alkylbase DNA glycosidase AlkA family.

The protein localises to the nucleus. It catalyses the reaction Hydrolysis of alkylated DNA, releasing 3-methyladenine, 3-methylguanine, 7-methylguanine and 7-methyladenine.. In terms of biological role, hydrolysis of the deoxyribose N-glycosidic bond to excise 3-methyladenine or 7-methyladenine from the damaged DNA polymer formed by alkylation lesions. This is DNA-3-methyladenine glycosylase (MAG1) from Saccharomyces cerevisiae (strain ATCC 204508 / S288c) (Baker's yeast).